The chain runs to 340 residues: Anthranilate phosphoribosyltransferase (340 aa).

Residues Gly-78, 81–82 (GD), Thr-86, 88–91 (NIST), 106–114 (KHGNRSVSS), and Ser-118 contribute to the 5-phospho-alpha-D-ribose 1-diphosphate site. Gly-78 contributes to the anthranilate binding site. Residue Ser-90 participates in Mg(2+) binding. Anthranilate is bound at residue Asn-109. Arg-164 is a binding site for anthranilate. Mg(2+) is bound by residues Asp-223 and Glu-224.

The protein belongs to the anthranilate phosphoribosyltransferase family. Homodimer. It depends on Mg(2+) as a cofactor.

The catalysed reaction is N-(5-phospho-beta-D-ribosyl)anthranilate + diphosphate = 5-phospho-alpha-D-ribose 1-diphosphate + anthranilate. It functions in the pathway amino-acid biosynthesis; L-tryptophan biosynthesis; L-tryptophan from chorismate: step 2/5. Functionally, catalyzes the transfer of the phosphoribosyl group of 5-phosphorylribose-1-pyrophosphate (PRPP) to anthranilate to yield N-(5'-phosphoribosyl)-anthranilate (PRA). This is Anthranilate phosphoribosyltransferase from Bacillus pumilus (strain SAFR-032).